Reading from the N-terminus, the 442-residue chain is Cyclic AMP receptor-like protein B (442 aa).

Residues 1–16 (MGGDIHLCSMILGKNH) are Extracellular-facing. The chain crosses the membrane as a helical span at residues 17–37 (LIFLYFANLFGSTLSFLATII). Residues 38 to 219 (TIVFYLVKKY…PKKIDTLIFY (182 aa)) are Cytoplasmic-facing. The segment at 83–166 (YSSTPISIQN…LSSSDKNNTI (84 aa)) is disordered. Residues 91 to 103 (QNNNNKNNNLPKQ) are compositionally biased toward low complexity. Residues 112–122 (INKNHNNYCNY) are compositionally biased toward polar residues. Over residues 123–144 (STSATSSSSSSSSFSSTNSGSS) the composition is skewed to low complexity. The span at 145 to 166 (YEYQQPQKNQQTLSSSDKNNTI) shows a compositional bias: polar residues. A helical transmembrane segment spans residues 220-240 (LSISDFIAVSGIIIEQLIIIF). The Extracellular segment spans residues 241-255 (NKEISKSIGFCIGER). The chain crosses the membrane as a helical span at residues 256–276 (VSIHFGLLATLFWSNCIAYYL). Residues 277 to 289 (LRETYELKPYNIR) lie on the Cytoplasmic side of the membrane. A helical transmembrane segment spans residues 290-310 (FVYFHIVCWGMALIGVASLFF). Residues 311-334 (SKIITVSNIDQGGSWCSVSSSYQL) lie on the Extracellular side of the membrane. Residues 335 to 355 (YFWVIPLFVSFTWNLICYCLI) form a helical membrane-spanning segment. The Cytoplasmic segment spans residues 356-382 (YRKFNKIIGIYGIQSVQIKTIIIRKLS). The chain crosses the membrane as a helical span at residues 383 to 403 (FYLLAFLITWVWDVINNSIFL). Residues 404 to 410 (YEGKCPP) lie on the Extracellular side of the membrane. Residues 411–431 (FALWILQEFFSSGYGFFNSLA) traverse the membrane as a helical segment. Residues 432 to 442 (YAVTTRFYSRK) are Cytoplasmic-facing.

Belongs to the G-protein coupled receptor 5 family.

It is found in the membrane. Its function is as follows. Receptor for cAMP. The chain is Cyclic AMP receptor-like protein B (crlB) from Dictyostelium discoideum (Social amoeba).